A 238-amino-acid polypeptide reads, in one-letter code: Uridylate kinase (238 aa).

11 to 14 contributes to the ATP binding site; the sequence is KLSG. UMP is bound at residue Gly-52. 2 residues coordinate ATP: Gly-53 and Arg-57. UMP is bound by residues Asp-72 and 134 to 141; that span reads TGFSYFTT. ATP-binding residues include Asn-162, Tyr-168, and Asp-171.

The protein belongs to the UMP kinase family. As to quaternary structure, homohexamer.

The protein localises to the cytoplasm. It catalyses the reaction UMP + ATP = UDP + ADP. The protein operates within pyrimidine metabolism; CTP biosynthesis via de novo pathway; UDP from UMP (UMPK route): step 1/1. Its activity is regulated as follows. Inhibited by UTP. Catalyzes the reversible phosphorylation of UMP to UDP. In Mesoplasma florum (strain ATCC 33453 / NBRC 100688 / NCTC 11704 / L1) (Acholeplasma florum), this protein is Uridylate kinase.